A 105-amino-acid polypeptide reads, in one-letter code: Malonate decarboxylase acyl carrier protein (105 aa).

At Ser-28 the chain carries O-(phosphoribosyl dephospho-coenzyme A)serine.

The protein belongs to the MdcC family. Covalently binds the prosthetic group of malonate decarboxylase.

It is found in the cytoplasm. Functionally, subunit of malonate decarboxylase, it is an acyl carrier protein to which acetyl and malonyl thioester residues are bound via a 2'-(5''-phosphoribosyl)-3'-dephospho-CoA prosthetic group and turn over during the catalytic mechanism. This chain is Malonate decarboxylase acyl carrier protein, found in Xanthomonas euvesicatoria pv. vesicatoria (strain 85-10) (Xanthomonas campestris pv. vesicatoria).